A 441-amino-acid chain; its full sequence is Diuretic hormone receptor (441 aa).

N-linked (GlcNAc...) asparagine glycans are attached at residues Asn-99, Asn-107, and Asn-112. Residues 135 to 158 traverse the membrane as a helical segment; that stretch reads FVFFVGFCLSLVAIAVAIWIFLYF. Topologically, residues 159 to 166 are cytoplasmic; it reads KDLRCLRN. A helical transmembrane segment spans residues 167-187; the sequence is TIHTNLMATYICNDATWIISA. At 188–194 the chain is on the extracellular side; it reads VVQEYVE. Residues 195–224 form a helical membrane-spanning segment; sequence NGGLCSVLAVLMHYFYLTNFFWMFVEGLYL. Topologically, residues 225-238 are cytoplasmic; the sequence is FLLVVATFTGEKVK. The chain crosses the membrane as a helical span at residues 239 to 260; sequence LQIYIIIGWGIPGVIVVTWAII. Residues 261–291 are Extracellular-facing; the sequence is KHLGKTAPDNAGESHPMVLLIKHCPWMAEDY. A helical transmembrane segment spans residues 292–315; the sequence is FDWIHQAPVITVLAVNLVFLFSIM. Residues 316–338 are Cytoplasmic-facing; it reads WVLITKLQSANTAETQQYRKATK. Residues 339–357 form a helical membrane-spanning segment; it reads ALLVLFPLLGITYILMMQG. Residues 358-371 are Extracellular-facing; sequence PMDGVAGHVFRNAQ. A helical membrane pass occupies residues 372 to 391; it reads ALLLSLQGFTVALFYCFLNT. Residues 392–441 are Cytoplasmic-facing; it reads EVQNTLRHRMSRWRETRTVGGGRRYTLSGHSKDWSPRSRTESIRCLQHRS.

It belongs to the G-protein coupled receptor 2 family. Expressed in Malpighian tubules.

The protein resides in the cell membrane. Receptor for the insect diurectic hormone. The activity of this receptor is mediated by G proteins which activate adenylyl cyclase. The polypeptide is Diuretic hormone receptor (Acheta domesticus (House cricket)).